We begin with the raw amino-acid sequence, 412 residues long: Chorismate synthase (412 aa).

NADP(+) is bound by residues Arg40 and Arg46. FMN contacts are provided by residues 134–136 (RAS), 255–256 (QA), Gly299, 314–318 (KPIAT), and Arg340.

It belongs to the chorismate synthase family. In terms of assembly, homotetramer. The cofactor is FMNH2.

The catalysed reaction is 5-O-(1-carboxyvinyl)-3-phosphoshikimate = chorismate + phosphate. Its pathway is metabolic intermediate biosynthesis; chorismate biosynthesis; chorismate from D-erythrose 4-phosphate and phosphoenolpyruvate: step 7/7. Catalyzes the anti-1,4-elimination of the C-3 phosphate and the C-6 proR hydrogen from 5-enolpyruvylshikimate-3-phosphate (EPSP) to yield chorismate, which is the branch point compound that serves as the starting substrate for the three terminal pathways of aromatic amino acid biosynthesis. This reaction introduces a second double bond into the aromatic ring system. This is Chorismate synthase from Clavibacter michiganensis subsp. michiganensis (strain NCPPB 382).